The chain runs to 370 residues: 3,7-dimethylxanthine N-methyltransferase CkTbS (370 aa).

Tyr-24 lines the S-adenosyl-L-homocysteine pocket. Thr-31 contacts theobromine. S-adenosyl-L-homocysteine-binding residues include Cys-67, Asn-72, Asp-104, Leu-105, Ser-139, and Phe-140. Residues Tyr-157, His-160, and Trp-161 each contribute to the theobromine site. Mg(2+) is bound at residue Asn-178. Theobromine is bound at residue His-226. 3 residues coordinate Mg(2+): Asp-264, Phe-266, and Asn-267. Phe-322 lines the theobromine pocket.

The protein belongs to the methyltransferase superfamily. Type-7 methyltransferase family. Requires Mg(2+) as cofactor.

The catalysed reaction is 7-methylxanthine + S-adenosyl-L-methionine = theobromine + S-adenosyl-L-homocysteine + H(+). It participates in alkaloid biosynthesis. Functionally, involved in the biosynthesis of caffeine in cv. Puer. Involved in the biosynthesis of theacrine in cv. Kucha, a caffeine-like xanthine alkaloid with diverse beneficial biological activities including anti-depressive, sedative, and hypnotic activities, improving learning and memory, increasing exercise activity, and preventing nonalcoholic fatty liver disease. Catalyzes the conversion of 7-methylxanthine (7mX) to theobromine but not able to convert paraxanthine to caffeine. The polypeptide is 3,7-dimethylxanthine N-methyltransferase CkTbS (Camellia sinensis var. assamica (Assam tea)).